The following is a 628-amino-acid chain: DNA mismatch repair protein MutL (628 aa).

Residues 350-402 (GLPFDVSESQGNDNHINNGKSRETKSERELYERRPNPFENRLMKESNSPSVGK) are disordered. Residues 356–368 (SESQGNDNHINNG) show a composition bias toward polar residues. The segment covering 369–393 (KSRETKSERELYERRPNPFENRLMK) has biased composition (basic and acidic residues).

It belongs to the DNA mismatch repair MutL/HexB family.

This protein is involved in the repair of mismatches in DNA. It is required for dam-dependent methyl-directed DNA mismatch repair. May act as a 'molecular matchmaker', a protein that promotes the formation of a stable complex between two or more DNA-binding proteins in an ATP-dependent manner without itself being part of a final effector complex. This is DNA mismatch repair protein MutL from Wolbachia sp. subsp. Brugia malayi (strain TRS).